Consider the following 418-residue polypeptide: Serine hydroxymethyltransferase (418 aa).

Residues Leu121 and 125–127 (GHL) contribute to the (6S)-5,6,7,8-tetrahydrofolate site. At Lys230 the chain carries N6-(pyridoxal phosphate)lysine. 355-357 (SPF) is a (6S)-5,6,7,8-tetrahydrofolate binding site.

The protein belongs to the SHMT family. Homodimer. Pyridoxal 5'-phosphate serves as cofactor.

Its subcellular location is the cytoplasm. The enzyme catalyses (6R)-5,10-methylene-5,6,7,8-tetrahydrofolate + glycine + H2O = (6S)-5,6,7,8-tetrahydrofolate + L-serine. Its pathway is one-carbon metabolism; tetrahydrofolate interconversion. It participates in amino-acid biosynthesis; glycine biosynthesis; glycine from L-serine: step 1/1. Functionally, catalyzes the reversible interconversion of serine and glycine with tetrahydrofolate (THF) serving as the one-carbon carrier. This reaction serves as the major source of one-carbon groups required for the biosynthesis of purines, thymidylate, methionine, and other important biomolecules. Also exhibits THF-independent aldolase activity toward beta-hydroxyamino acids, producing glycine and aldehydes, via a retro-aldol mechanism. This Streptococcus pyogenes serotype M3 (strain ATCC BAA-595 / MGAS315) protein is Serine hydroxymethyltransferase.